The sequence spans 546 residues: Probable protein kinase UbiB (546 aa).

Positions 124–502 (DFEIKPLASA…HVRQGQSRYF (379 aa)) constitute a Protein kinase domain. ATP contacts are provided by residues 130–138 (LASASIAQV) and K153. D288 serves as the catalytic Proton acceptor. 2 helical membrane passes run 501–521 (YFLG…VSRP) and 522–542 (EWGL…FVGW).

The protein belongs to the ABC1 family. UbiB subfamily.

The protein localises to the cell inner membrane. The protein operates within cofactor biosynthesis; ubiquinone biosynthesis [regulation]. Its function is as follows. Is probably a protein kinase regulator of UbiI activity which is involved in aerobic coenzyme Q (ubiquinone) biosynthesis. This Escherichia coli O127:H6 (strain E2348/69 / EPEC) protein is Probable protein kinase UbiB.